The sequence spans 457 residues: MQQYLTEARKLSALAVPVIIAQVSQTSMGVVDTIMAGAYSATDMAAVAVGTSIWLPAILFGHGLLLALTPVVAQLNGSGRRDRISHQVRQSFFLAAIISVLTMLVLYQGEYAINLMSNDSPELAAKAIGYLHALLWGVPGYLFYQVLRCQCEGLSKTYPGMMIGFIGLLINIPINYIFIHGKFGMPELGGVGCGVATASVYWIMMLLMMLYTQRASWLRDIRLHRPAFRPDFTVLKRLFGLGLPIALALLFEVTLFAVVALLVLPLGVVNVAGHQIALNFSSLMFVLPLSVGVATTIRVGHRLGEGSVDNARIAAHTGIMAGVALACCTAIFTTLLREPIALLYNQDPLVVAMASQLMLLAAVYQISDAVQVIGTGVLRGYKDTRSIFYITFVAYWVLGLPSGYLLALTDVIVPRMGPAGFWCGFIIGLTAAAVMMVTRIRFLQRQPAARILARAAR.

12 helical membrane-spanning segments follow: residues 11–31 (LSALAVPVIIAQVSQTSMGVV), 53–73 (IWLPAILFGHGLLLALTPVVA), 93–113 (FLAAIISVLTMLVLYQGEYAI), 127–147 (AIGYLHALLWGVPGYLFYQVL), 159–179 (PGMMIGFIGLLINIPINYIFI), 190–210 (GVGCGVATASVYWIMMLLMML), 249–269 (LLFEVTLFAVVALLVLPLGVV), 276–296 (IALNFSSLMFVLPLSVGVATT), 313–333 (IAAHTGIMAGVALACCTAIFT), 357–377 (LMLLAAVYQISDAVQVIGTGV), 387–407 (IFYITFVAYWVLGLPSGYLLA), and 417–437 (GPAGFWCGFIIGLTAAAVMMV).

The protein belongs to the multi antimicrobial extrusion (MATE) (TC 2.A.66.1) family. MdtK subfamily.

It localises to the cell inner membrane. In terms of biological role, multidrug efflux pump that functions probably as a Na(+)/drug antiporter. The chain is Multidrug resistance protein MdtK from Pectobacterium atrosepticum (strain SCRI 1043 / ATCC BAA-672) (Erwinia carotovora subsp. atroseptica).